Reading from the N-terminus, the 415-residue chain is Serine--tRNA ligase (415 aa).

T231–E233 is a binding site for L-serine. ATP is bound at residue R262 to E264. E285 lines the L-serine pocket. E349–S352 contacts ATP. An L-serine-binding site is contributed by S383.

This sequence belongs to the class-II aminoacyl-tRNA synthetase family. Type-1 seryl-tRNA synthetase subfamily. As to quaternary structure, homodimer. The tRNA molecule binds across the dimer.

The protein resides in the cytoplasm. The enzyme catalyses tRNA(Ser) + L-serine + ATP = L-seryl-tRNA(Ser) + AMP + diphosphate + H(+). The catalysed reaction is tRNA(Sec) + L-serine + ATP = L-seryl-tRNA(Sec) + AMP + diphosphate + H(+). Its pathway is aminoacyl-tRNA biosynthesis; selenocysteinyl-tRNA(Sec) biosynthesis; L-seryl-tRNA(Sec) from L-serine and tRNA(Sec): step 1/1. Catalyzes the attachment of serine to tRNA(Ser). Is also able to aminoacylate tRNA(Sec) with serine, to form the misacylated tRNA L-seryl-tRNA(Sec), which will be further converted into selenocysteinyl-tRNA(Sec). The protein is Serine--tRNA ligase of Helicobacter pylori (strain Shi470).